Here is a 203-residue protein sequence, read N- to C-terminus: Thymidylate kinase (203 aa).

10–17 is a binding site for ATP; the sequence is GIDGSGKS.

The protein belongs to the thymidylate kinase family.

It carries out the reaction dTMP + ATP = dTDP + ADP. Phosphorylation of dTMP to form dTDP in both de novo and salvage pathways of dTTP synthesis. This chain is Thymidylate kinase, found in Brachyspira hyodysenteriae (strain ATCC 49526 / WA1).